We begin with the raw amino-acid sequence, 201 residues long: Ribosome maturation factor RimP (201 aa).

This sequence belongs to the RimP family.

The protein localises to the cytoplasm. Its function is as follows. Required for maturation of 30S ribosomal subunits. In Rhizobium leguminosarum bv. trifolii (strain WSM2304), this protein is Ribosome maturation factor RimP.